A 351-amino-acid polypeptide reads, in one-letter code: MSKLWSPIVAALKPYVPGEQPRMADLVKLNTNESPYGPSEKALGAIRAAADTDLRLYPDPVALGLRQAIAARHQVSVGEVFVGNGSDEVLAHTFAALLKHDRPLLFPDISYSFYTTYAGLFGIEAVEVPLDAAFRIDIADYRRPSGAVILPNPNAPTGIGLPLAEIERLVADHPGQPVVIDEAYIDFGGESAIALVPKYDNLLVVQTFSKSRALAGLRVGFAIGQRPLIEALERVKDSFNSYPLGRAAQAGATAAIEDEAWFEATRGKIIASRAKLTSELEKRGFEVLPSQANFVFARHPGHAGQTLAAKLRERAVIVRHFAKPRIADFLRITIGTDAECAKLVAALDEVL.

K210 is modified (N6-(pyridoxal phosphate)lysine).

The protein belongs to the class-II pyridoxal-phosphate-dependent aminotransferase family. Histidinol-phosphate aminotransferase subfamily. Homodimer. Requires pyridoxal 5'-phosphate as cofactor.

The enzyme catalyses L-histidinol phosphate + 2-oxoglutarate = 3-(imidazol-4-yl)-2-oxopropyl phosphate + L-glutamate. It functions in the pathway amino-acid biosynthesis; L-histidine biosynthesis; L-histidine from 5-phospho-alpha-D-ribose 1-diphosphate: step 7/9. In Rhizobium meliloti (strain 1021) (Ensifer meliloti), this protein is Histidinol-phosphate aminotransferase 2 (hisC2).